A 765-amino-acid polypeptide reads, in one-letter code: Membrane metallo-endopeptidase-like 1 (765 aa).

Topologically, residues 1-19 (MVERAGWCRKKSPGFVEYG) are cytoplasmic. The chain crosses the membrane as a helical; Signal-anchor for type II membrane protein span at residues 20–40 (LMVLLLLLLGAIVTLGVFYSI). At 41 to 765 (GKQLPLLTSL…MHPMKRCRIW (725 aa)) the chain is on the lumenal side. A Peptidase M13 domain is found at 74–765 (ICTTPSCVIA…MHPMKRCRIW (692 aa)). Intrachain disulfides connect Cys-75–Cys-80, Cys-98–Cys-750, Cys-106–Cys-710, Cys-161–Cys-425, and Cys-636–Cys-762. Residue Arg-121 coordinates a peptide. Residues Asn-163, Asn-279, Asn-303, and Asn-336 are each glycosylated (N-linked (GlcNAc...) asparagine). Positions 523-549 (FENGLQNLKNNAQRSLKKLREKVDQNL) form a coiled coil. His-599 provides a ligand contact to Zn(2+). The active site involves Glu-600. Residues His-603 and Glu-662 each coordinate Zn(2+). Residue Asp-666 is the Proton donor of the active site. Asn-694 carries an N-linked (GlcNAc...) asparagine glycan.

It belongs to the peptidase M13 family. The cofactor is Zn(2+). N-glycosylated. In terms of tissue distribution, highly expressed in testis. Also expressed in ovary. Weakly or not expressed in brain, lung, heart, liver, kidney, adrenal gland and intestine.

Its subcellular location is the membrane. It localises to the secreted. The catalysed reaction is Preferential cleavage of polypeptides between hydrophobic residues, particularly with Phe or Tyr at P1'.. With respect to regulation, inhibited by thiorphan and phosphoramidon. Metalloprotease involved in sperm function, possibly by modulating the processes of fertilization and early embryonic development. Degrades a broad variety of small peptides with a preference for peptides shorter than 3 kDa containing neutral bulky aliphatic or aromatic amino acid residues. Shares the same substrate specificity with MME and cleaves peptides at the same amide bond. The sequence is that of Membrane metallo-endopeptidase-like 1 (Mmel1) from Mus musculus (Mouse).